Reading from the N-terminus, the 166-residue chain is Replication restart protein DnaT (166 aa).

Belongs to the DnaT family. Homooligomerizes. Interacts with PriB. Component of the replication restart primosome. Primosome assembly occurs via a 'hand-off' mechanism. PriA binds to replication forks, subsequently PriB then DnaT bind; DnaT then displaces ssDNA to generate the helicase loading substrate.

Involved in the restart of stalled replication forks, which reloads the replicative helicase on sites other than the origin of replication. Can function in multiple replication restart pathways. Displaces ssDNA from a PriB-ssDNA complex. Probably forms a spiral filament on ssDNA. The protein is Replication restart protein DnaT of Buchnera aphidicola subsp. Schizaphis graminum (strain Sg).